The chain runs to 374 residues: Probable trehalose-phosphate phosphatase 9 (374 aa).

Belongs to the trehalose phosphatase family. A divalent metal cation serves as cofactor.

It carries out the reaction alpha,alpha-trehalose 6-phosphate + H2O = alpha,alpha-trehalose + phosphate. It participates in glycan biosynthesis; trehalose biosynthesis. Removes the phosphate from trehalose 6-phosphate to produce free trehalose. Trehalose accumulation in plant may improve abiotic stress tolerance. The sequence is that of Probable trehalose-phosphate phosphatase 9 (TPP9) from Oryza sativa subsp. japonica (Rice).